The chain runs to 153 residues: Pheromone-binding protein Gp-9 (153 aa).

Positions 1 to 19 (MKTFVLHIFIFALVAFASA) are cleaved as a signal peptide. Intrachain disulfides connect Cys-37–Cys-77, Cys-73–Cys-129, and Cys-118–Cys-138.

It belongs to the PBP/GOBP family. As to quaternary structure, homodimer.

The protein localises to the secreted. Colony queen number, a major feature of social organization, is associated with worker genotype for Gp-9. Colonies are headed by either a single reproductive queen (monogyne form) or multiple queens (polygyne form). Differences in worker Gp-9 genotypes between social forms may cause differences in workers' abilities to recognize queens and regulate their numbers. The polypeptide is Pheromone-binding protein Gp-9 (Solenopsis daguerrei (Workerless parasitic ant)).